Reading from the N-terminus, the 276-residue chain is Shikimate dehydrogenase (NADP(+)) (276 aa).

Shikimate-binding positions include Ser-15–Ser-17 and Thr-63. Lys-67 (proton acceptor) is an active-site residue. Residue Asp-79 coordinates NADP(+). 2 residues coordinate shikimate: Asn-88 and Asp-103. Residues Gly-130–Ala-134, Asn-154–Arg-159, and Ile-217 contribute to the NADP(+) site. Tyr-219 provides a ligand contact to shikimate. Residue Gly-240 coordinates NADP(+).

The protein belongs to the shikimate dehydrogenase family. Homodimer.

The enzyme catalyses shikimate + NADP(+) = 3-dehydroshikimate + NADPH + H(+). Its pathway is metabolic intermediate biosynthesis; chorismate biosynthesis; chorismate from D-erythrose 4-phosphate and phosphoenolpyruvate: step 4/7. Functionally, involved in the biosynthesis of the chorismate, which leads to the biosynthesis of aromatic amino acids. Catalyzes the reversible NADPH linked reduction of 3-dehydroshikimate (DHSA) to yield shikimate (SA). This chain is Shikimate dehydrogenase (NADP(+)), found in Oceanobacillus iheyensis (strain DSM 14371 / CIP 107618 / JCM 11309 / KCTC 3954 / HTE831).